A 473-amino-acid chain; its full sequence is Trehalose-6-phosphate synthase (473 aa).

R10 provides a ligand contact to D-glucose 6-phosphate. A UDP-alpha-D-glucose-binding site is contributed by 21-22; the sequence is GG. D-glucose 6-phosphate-binding residues include Y76 and D130. The UDP-alpha-D-glucose site is built by R262 and K267. R300 is a binding site for D-glucose 6-phosphate. UDP-alpha-D-glucose is bound by residues F339 and 365 to 369; that span reads LVAKE.

It belongs to the glycosyltransferase 20 family. Homotetramer.

The enzyme catalyses D-glucose 6-phosphate + UDP-alpha-D-glucose = alpha,alpha-trehalose 6-phosphate + UDP + H(+). It functions in the pathway glycan biosynthesis; trehalose biosynthesis. Its function is as follows. Probably involved in the osmoprotection via the biosynthesis of trehalose. Catalyzes the transfer of glucose from UDP-alpha-D-glucose (UDP-Glc) to D-glucose 6-phosphate (Glc-6-P) to form trehalose-6-phosphate. Acts with retention of the anomeric configuration of the UDP-sugar donor. This chain is Trehalose-6-phosphate synthase, found in Citrobacter koseri (strain ATCC BAA-895 / CDC 4225-83 / SGSC4696).